A 204-amino-acid polypeptide reads, in one-letter code: Urease accessory protein UreG (204 aa).

Residue 12–19 (GPVGSGKT) participates in GTP binding.

The protein belongs to the SIMIBI class G3E GTPase family. UreG subfamily. Homodimer. UreD, UreF and UreG form a complex that acts as a GTP-hydrolysis-dependent molecular chaperone, activating the urease apoprotein by helping to assemble the nickel containing metallocenter of UreC. The UreE protein probably delivers the nickel.

It is found in the cytoplasm. In terms of biological role, facilitates the functional incorporation of the urease nickel metallocenter. This process requires GTP hydrolysis, probably effectuated by UreG. The chain is Urease accessory protein UreG from Azotobacter vinelandii (strain DJ / ATCC BAA-1303).